The primary structure comprises 303 residues: Glutamyl-Q tRNA(Asp) synthetase (303 aa).

L-glutamate-binding positions include 16-20 and glutamate 52; that span reads RFAPS. The 'HIGH' region signature appears at 19–29; the sequence is PSPSGPLHFGS. Zn(2+)-binding residues include cysteine 108, cysteine 110, tyrosine 122, and cysteine 126. L-glutamate contacts are provided by tyrosine 177 and arginine 195. Residues 233–237 carry the 'KMSKS' region motif; the sequence is KLSKQ. Lysine 236 contacts ATP.

Belongs to the class-I aminoacyl-tRNA synthetase family. GluQ subfamily. Zn(2+) is required as a cofactor.

Functionally, catalyzes the tRNA-independent activation of glutamate in presence of ATP and the subsequent transfer of glutamate onto a tRNA(Asp). Glutamate is transferred on the 2-amino-5-(4,5-dihydroxy-2-cyclopenten-1-yl) moiety of the queuosine in the wobble position of the QUC anticodon. The chain is Glutamyl-Q tRNA(Asp) synthetase from Vibrio vulnificus (strain CMCP6).